The sequence spans 89 residues: Small ribosomal subunit protein uS14A (89 aa).

It belongs to the universal ribosomal protein uS14 family. Part of the 30S ribosomal subunit. Contacts proteins S3 and S10.

In terms of biological role, binds 16S rRNA, required for the assembly of 30S particles and may also be responsible for determining the conformation of the 16S rRNA at the A site. This chain is Small ribosomal subunit protein uS14A, found in Staphylococcus saprophyticus subsp. saprophyticus (strain ATCC 15305 / DSM 20229 / NCIMB 8711 / NCTC 7292 / S-41).